Here is a 159-residue protein sequence, read N- to C-terminus: SsrA-binding protein (159 aa).

The protein belongs to the SmpB family.

Its subcellular location is the cytoplasm. Functionally, required for rescue of stalled ribosomes mediated by trans-translation. Binds to transfer-messenger RNA (tmRNA), required for stable association of tmRNA with ribosomes. tmRNA and SmpB together mimic tRNA shape, replacing the anticodon stem-loop with SmpB. tmRNA is encoded by the ssrA gene; the 2 termini fold to resemble tRNA(Ala) and it encodes a 'tag peptide', a short internal open reading frame. During trans-translation Ala-aminoacylated tmRNA acts like a tRNA, entering the A-site of stalled ribosomes, displacing the stalled mRNA. The ribosome then switches to translate the ORF on the tmRNA; the nascent peptide is terminated with the 'tag peptide' encoded by the tmRNA and targeted for degradation. The ribosome is freed to recommence translation, which seems to be the essential function of trans-translation. The polypeptide is SsrA-binding protein (Idiomarina loihiensis (strain ATCC BAA-735 / DSM 15497 / L2-TR)).